Consider the following 188-residue polypeptide: Capsid protein (188 aa).

This sequence belongs to the tymoviruses capsid protein family.

It is found in the virion. Its function is as follows. Self-assembles to form a T=3 icosahedral capsid composed of 180 copies of the capsid protein. The capsid encapsulates the single-stranded RNA genome. This Solanum lycopersicum (Tomato) protein is Capsid protein.